Here is a 612-residue protein sequence, read N- to C-terminus: Actin-binding LIM protein 2 (612 aa).

4 consecutive LIM zinc-binding domains span residues 22 to 81, 81 to 141, 151 to 210, and 210 to 270; these read ILCN…LYGT, TRCF…TLVG, RSCG…KFGI, and IRCD…ARTE. The Zn(2+) site is built by Cys83, Cys86, His103, Cys106, Cys109, Cys112, Cys131, and Cys134. Residues Cys212, Cys215, His232, Cys235, Cys238, Cys241, His260, and Cys263 each contribute to the Zn(2+) site. Residues 269–278 are compositionally biased toward basic and acidic residues; it reads TEDKSKETRT. Disordered stretches follow at residues 269-295 and 341-433; these read TEDKSKETRTSSESIVSVPASSTSGSP and AVGD…DNIY. Composition is skewed to low complexity over residues 279–295 and 364–373; these read SSESIVSVPASSTSGSP and SSPSSAGSVS. Phosphoserine is present on residues Ser282, Ser294, Ser365, and Ser368. Residues 394-416 are compositionally biased toward polar residues; it reads SGRSTPSLSVHSDSRPPSSTYQQ. Phosphoserine is present on Ser453. The interval 471–520 is disordered; that stretch reads ADTRTNSPDLDSQSLSLSSGADQEPLQRMPGDSLYSRFPYSKPDTLPGPR. Thr473 bears the Phosphothreonine mark. Residues Ser477 and Ser579 each carry the phosphoserine modification. Positions 477 to 489 are enriched in low complexity; the sequence is SPDLDSQSLSLSS. The HP domain maps to 544–612; it reads TREYKIYPYD…NDLKKKALLF (69 aa).

As to quaternary structure, interacts with F-actin and ABRA.

The protein resides in the cytoplasm. Its function is as follows. May act as scaffold protein. May stimulate ABRA activity and ABRA-dependent SRF transcriptional activity. This is Actin-binding LIM protein 2 (Ablim2) from Rattus norvegicus (Rat).